We begin with the raw amino-acid sequence, 400 residues long: Elongation factor Tu (400 aa).

A tr-type G domain is found at 10–208 (KPHVNVGTIG…AMDNYIPDPQ (199 aa)). Residues 19–26 (GHIDHGKS) are G1. 19–26 (GHIDHGKS) contacts GTP. Mg(2+) is bound at residue Ser-26. The interval 60–64 (GITIN) is G2. A G3 region spans residues 81–84 (DCPG). Residues 81 to 85 (DCPGH) and 136 to 139 (NKTD) each bind GTP. The segment at 136-139 (NKTD) is G4. The interval 174–176 (SAL) is G5.

Belongs to the TRAFAC class translation factor GTPase superfamily. Classic translation factor GTPase family. EF-Tu/EF-1A subfamily. As to quaternary structure, monomer.

The protein resides in the cytoplasm. It catalyses the reaction GTP + H2O = GDP + phosphate + H(+). Functionally, GTP hydrolase that promotes the GTP-dependent binding of aminoacyl-tRNA to the A-site of ribosomes during protein biosynthesis. The sequence is that of Elongation factor Tu from Thermotoga maritima (strain ATCC 43589 / DSM 3109 / JCM 10099 / NBRC 100826 / MSB8).